The following is a 208-amino-acid chain: ATP synthase subunit beta, chloroplastic (208 aa).

The protein belongs to the ATPase alpha/beta chains family. F-type ATPases have 2 components, CF(1) - the catalytic core - and CF(0) - the membrane proton channel. CF(1) has five subunits: alpha(3), beta(3), gamma(1), delta(1), epsilon(1). CF(0) has four main subunits: a(1), b(1), b'(1) and c(9-12).

The protein localises to the plastid. It localises to the chloroplast thylakoid membrane. The enzyme catalyses ATP + H2O + 4 H(+)(in) = ADP + phosphate + 5 H(+)(out). In terms of biological role, produces ATP from ADP in the presence of a proton gradient across the membrane. The catalytic sites are hosted primarily by the beta subunits. This chain is ATP synthase subunit beta, chloroplastic (atpB), found in Hypolepis hostilis (Fern).